The following is a 434-amino-acid chain: Tryptophan dimethylallyltransferase nptA (434 aa).

L-tryptophan is bound by residues 91 to 92 (SL) and Glu-100. 3 residues coordinate substrate: Arg-115, Lys-202, and Tyr-204. An L-tryptophan-binding site is contributed by Tyr-206. The substrate site is built by Arg-271, Lys-273, Tyr-275, Tyr-358, Tyr-423, and Tyr-427.

It belongs to the tryptophan dimethylallyltransferase family. As to quaternary structure, homodimer.

The enzyme catalyses L-tryptophan + dimethylallyl diphosphate = 4-(3-methylbut-2-enyl)-L-tryptophan + diphosphate. It participates in secondary metabolite biosynthesis. Its function is as follows. Nonribosomal peptide synthase involved in the synthesis of nidulanin A and derived compounds. Nidulanin A is a tetracyclopeptide with the sequence L-Phe-L-Kyn-L-Val-D-Val and an isoprene unit N-linked to the amino group of L-kynurenine. The NRPS nlsA is responsible of the synthesis of the cyclopeptide and the prenyltransferase nptA adds the isoprene unit on the L-kynurenine residue of nidulanin A. Further modifications lead to additional oxygenated related compounds. This chain is Tryptophan dimethylallyltransferase nptA, found in Emericella nidulans (strain FGSC A4 / ATCC 38163 / CBS 112.46 / NRRL 194 / M139) (Aspergillus nidulans).